Reading from the N-terminus, the 529-residue chain is Ribonuclease Y (529 aa).

A helical membrane pass occupies residues 4–24 (GLIYISLEVIVACLISALAMY). Residues 216-297 (FTNRIALPCS…NRIEEVYHRV (82 aa)) enclose the KH domain. Positions 342 to 435 (ALQHSKEVAL…VCAADALSAG (94 aa)) constitute an HD domain.

Belongs to the RNase Y family.

It is found in the cell membrane. Functionally, endoribonuclease that initiates mRNA decay. The chain is Ribonuclease Y from Helicobacter acinonychis (strain Sheeba).